The following is a 528-amino-acid chain: Low affinity inorganic phosphate transporter 4 (528 aa).

Residues methionine 1–histidine 18 lie on the Cytoplasmic side of the membrane. Residues valine 19–isoleucine 39 traverse the membrane as a helical segment. Topologically, residues threonine 40 to asparagine 68 are extracellular. Residues leucine 69–glycine 89 form a helical membrane-spanning segment. Topologically, residues aspartate 90–lysine 96 are cytoplasmic. Residues valine 97–glycine 117 form a helical membrane-spanning segment. Residues alanine 118–serine 122 lie on the Extracellular side of the membrane. Residues valine 123–proline 143 traverse the membrane as a helical segment. Over leucine 144–arginine 158 the chain is Cytoplasmic. A helical transmembrane segment spans residues glycine 159–valine 179. At serine 180–glycine 208 the chain is on the extracellular side. A helical transmembrane segment spans residues aspartate 209–tryptophan 229. Topologically, residues arginine 230–histidine 292 are cytoplasmic. The helical transmembrane segment at leucine 293–threonine 313 threads the bilayer. At glutamine 314 to arginine 341 the chain is on the extracellular side. Residues alanine 342–isoleucine 362 traverse the membrane as a helical segment. Residues glutamate 363–glutamine 371 lie on the Cytoplasmic side of the membrane. The chain crosses the membrane as a helical span at residues leucine 372–leucine 392. Over arginine 393–alanine 401 the chain is Extracellular. Residues leucine 402–leucine 422 form a helical membrane-spanning segment. Residues proline 423 to serine 433 lie on the Cytoplasmic side of the membrane. The chain crosses the membrane as a helical span at residues threonine 434 to isoleucine 454. The Extracellular segment spans residues glutamine 455–lysine 467. Asparagine 456 carries N-linked (GlcNAc...) asparagine glycosylation. A helical membrane pass occupies residues histidine 468–threonine 488. At glutamate 489 to methionine 528 the chain is on the cytoplasmic side. 2 stretches are compositionally biased toward basic and acidic residues: residues glutamate 496–glutamate 507 and threonine 519–methionine 528. Positions glutamate 496–methionine 528 are disordered.

It belongs to the major facilitator superfamily. Phosphate:H(+) symporter (TC 2.A.1.9) family. Expressed only in mycorrhizal roots, exclusively in cortical cells containing arbuscules, upon arbuscular mycorrhizal (AM) symbiosis with AM fungi (e.g. Gigaspora margarita and Funnelliformis mosseae). Also observed in root tips of non-mycorrhizal roots, in a phosphate (Pi) depended-manner, highest expression levels being observed in low Pi conditions.

Its subcellular location is the cell membrane. The enzyme catalyses phosphate(in) + H(+)(in) = phosphate(out) + H(+)(out). Low-affinity transporter for external inorganic phosphate (Pi) probably involved in the acquisition of phosphate released by arbuscular mycorrhizal (AM) fungi (e.g. Gigaspora margarita and Funnelliformis mosseae) during AM symbiosis; required for propper mycorrhizal arbuscule morphology. Acts as a Pi-sensing machinery at the root tip level, independently of AM fungi, involved in the regulation of early root branching and lateral roots formation. In Lotus japonicus (Lotus corniculatus var. japonicus), this protein is Low affinity inorganic phosphate transporter 4.